Here is a 559-residue protein sequence, read N- to C-terminus: Hepatocyte nuclear factor 1-alpha (559 aa).

The HNF-p1 domain maps to 13–44 (GPGRLSALQEQLIWALLGSGLSREVLVHALGE). Residues 14 to 43 (PGRLSALQEQLIWALLGSGLSREVLVHALG) form a dimerization region. Over residues 49-62 (RVTPGAEKGDRGDG) the composition is skewed to basic and acidic residues. The disordered stretch occupies residues 49 to 73 (RVTPGAEKGDRGDGESSEEGEMDFP). The region spanning 78 to 173 (QELEALAPEE…ISQQFTNARH (96 aa)) is the POU-specific atypical domain. Interaction with DNA stretches follow at residues 121–123 (QRE), 134–140 (HLSQHLN), 146–149 (KNQK), 192–195 (RFKW), 252–254 (RVY), and 259–262 (NRRK). A Nuclear localization signal motif is present at residues 186–194 (RKGRRNRFK). The segment at residues 188–268 (GRRNRFKWGP…NRRKEEAFRH (81 aa)) is a DNA-binding region (homeobox; HNF1-type). A disordered region spans residues 492 to 559 (TDPEEQTDQP…IPAQMVSTAQ (68 aa)). Residues 499-522 (DQPIQEDSLHLQSPSPVPVSSGNL) show a composition bias toward polar residues.

Belongs to the HNF1 homeobox family. In terms of assembly, binds DNA as a dimer. Expressed in liver, intestine, spleen and kidney.

It is found in the nucleus. Its function is as follows. Transcriptional activator that regulates the tissue specific expression of multiple genes, especially in pancreas and liver. Binds to the promoter of the albumin gene. In Salmo salar (Atlantic salmon), this protein is Hepatocyte nuclear factor 1-alpha (hnf1a).